A 541-amino-acid polypeptide reads, in one-letter code: Atrial natriuretic peptide receptor 3 (541 aa).

Residues 1–26 (MPSLLVLTFSPCVLLGWALLAGGTGG) form the signal peptide. Over 27–481 (GGVGGGGGGA…PCKSSGGLEE (455 aa)) the chain is Extracellular. Residue Asn86 is glycosylated (N-linked (GlcNAc...) (complex) asparagine). Residues Ser106, Val135, and Cys136 each contribute to the chloride site. 2 disulfide bridges follow: Cys108/Cys136 and Cys213/Cys261. The N-linked (GlcNAc...) (high mannose) asparagine glycan is linked to Asn293. Asn394 is a glycosylation site (N-linked (GlcNAc...) (complex) asparagine). The chain crosses the membrane as a helical span at residues 482-504 (SAVTGIVVGALLGAGLLMAFYFF). Residues 505–541 (RKKYRITIERRTQQEESNLGKHRELREDSIRSHFSVA) are Cytoplasmic-facing.

It belongs to the ANF receptor family. As to quaternary structure, homodimer; disulfide-linked. Dimers can also be formed through the C-terminal cysteine of isoform 2. Interacts with OSTN.

It is found in the cell membrane. Functionally, receptor for the natriuretic peptide hormones, binding with similar affinities atrial natriuretic peptide NPPA/ANP, brain natriuretic peptide NPPB/BNP, and C-type natriuretic peptide NPPC/CNP. May function as a clearance receptor for NPPA, NPPB and NPPC, regulating their local concentrations and effects. Acts as a regulator of osteoblast differentiation and bone growth by binding to its ligand osteocrin, thereby preventing binding between NPR3/NPR-C and natriuretic peptides, leading to increase cGMP production. The protein is Atrial natriuretic peptide receptor 3 (NPR3) of Homo sapiens (Human).